We begin with the raw amino-acid sequence, 463 residues long: A-type ATP synthase subunit B (463 aa).

It belongs to the ATPase alpha/beta chains family. Has multiple subunits with at least A(3), B(3), C, D, E, F, H, I and proteolipid K(x).

It localises to the cell membrane. Component of the A-type ATP synthase that produces ATP from ADP in the presence of a proton gradient across the membrane. The B chain is a regulatory subunit. This is A-type ATP synthase subunit B from Aeropyrum pernix (strain ATCC 700893 / DSM 11879 / JCM 9820 / NBRC 100138 / K1).